Consider the following 250-residue polypeptide: Probable transcriptional regulatory protein Cpha266_0538 (250 aa).

This sequence belongs to the TACO1 family.

Its subcellular location is the cytoplasm. The chain is Probable transcriptional regulatory protein Cpha266_0538 from Chlorobium phaeobacteroides (strain DSM 266 / SMG 266 / 2430).